Reading from the N-terminus, the 82-residue chain is MPAIDVGRIAVIIAGRRAGQKCVIVDIIDKNFVLVTGAGLNKVKRRRMNIKHLEPLPEKIDIPRGASDEEVKAALEKAGISL.

This sequence belongs to the eukaryotic ribosomal protein eL14 family.

The sequence is that of Large ribosomal subunit protein eL14 from Pyrococcus abyssi (strain GE5 / Orsay).